The following is a 546-amino-acid chain: Probable ganciclovir kinase (546 aa).

A compositionally biased stretch (polar residues) spans 1-11 (MEQLKTPQNQK). A disordered region spans residues 1–29 (MEQLKTPQNQKTRPRNMLPKKKGKELKKR). Residues 12–29 (TRPRNMLPKKKGKELKKR) show a composition bias toward basic residues. Residues 185–193 (LGSGSYGMV) and Lys202 contribute to the ATP site. Asp297 acts as the Proton acceptor in catalysis.

This sequence belongs to the protein kinase superfamily. Tyr protein kinase family. HCMV ganciclovir subfamily.

Its function is as follows. Phosphorylates the antiviral nucleoside analog ganciclovir. This chain is Probable ganciclovir kinase (U69), found in Human herpesvirus 7 (strain JI) (HHV-7).